Consider the following 610-residue polypeptide: DNA mismatch repair protein MutL (610 aa).

Belongs to the DNA mismatch repair MutL/HexB family.

In terms of biological role, this protein is involved in the repair of mismatches in DNA. It is required for dam-dependent methyl-directed DNA mismatch repair. May act as a 'molecular matchmaker', a protein that promotes the formation of a stable complex between two or more DNA-binding proteins in an ATP-dependent manner without itself being part of a final effector complex. This Rickettsia conorii (strain ATCC VR-613 / Malish 7) protein is DNA mismatch repair protein MutL.